A 488-amino-acid chain; its full sequence is Probable cytosol aminopeptidase (488 aa).

K251 and D256 together coordinate Mn(2+). Residue K263 is part of the active site. Mn(2+) is bound by residues D274, D333, and E335. R337 is a catalytic residue.

It belongs to the peptidase M17 family. The cofactor is Mn(2+).

It localises to the cytoplasm. The enzyme catalyses Release of an N-terminal amino acid, Xaa-|-Yaa-, in which Xaa is preferably Leu, but may be other amino acids including Pro although not Arg or Lys, and Yaa may be Pro. Amino acid amides and methyl esters are also readily hydrolyzed, but rates on arylamides are exceedingly low.. It catalyses the reaction Release of an N-terminal amino acid, preferentially leucine, but not glutamic or aspartic acids.. In terms of biological role, presumably involved in the processing and regular turnover of intracellular proteins. Catalyzes the removal of unsubstituted N-terminal amino acids from various peptides. The chain is Probable cytosol aminopeptidase from Cenarchaeum symbiosum (strain A).